The chain runs to 151 residues: D-aminoacyl-tRNA deacylase (151 aa).

The Gly-cisPro motif, important for rejection of L-amino acids motif lies at 137–138 (GP).

The protein belongs to the DTD family. Homodimer.

Its subcellular location is the cytoplasm. The catalysed reaction is glycyl-tRNA(Ala) + H2O = tRNA(Ala) + glycine + H(+). The enzyme catalyses a D-aminoacyl-tRNA + H2O = a tRNA + a D-alpha-amino acid + H(+). Its function is as follows. An aminoacyl-tRNA editing enzyme that deacylates mischarged D-aminoacyl-tRNAs. Also deacylates mischarged glycyl-tRNA(Ala), protecting cells against glycine mischarging by AlaRS. Acts via tRNA-based rather than protein-based catalysis; rejects L-amino acids rather than detecting D-amino acids in the active site. By recycling D-aminoacyl-tRNA to D-amino acids and free tRNA molecules, this enzyme counteracts the toxicity associated with the formation of D-aminoacyl-tRNA entities in vivo and helps enforce protein L-homochirality. The protein is D-aminoacyl-tRNA deacylase of Fusobacterium nucleatum subsp. nucleatum (strain ATCC 25586 / DSM 15643 / BCRC 10681 / CIP 101130 / JCM 8532 / KCTC 2640 / LMG 13131 / VPI 4355).